The primary structure comprises 42 residues: Potassium channel toxin gamma-KTx 1.2 (42 aa).

4 cysteine pairs are disulfide-bonded: C5-C23, C11-C34, C20-C39, and C24-C41.

The protein belongs to the ergtoxin family. Gamma-KTx 1 subfamily. In terms of tissue distribution, expressed by the venom gland.

The protein resides in the secreted. Its function is as follows. Blocks Kv11/ERG potassium channels. The protein is Potassium channel toxin gamma-KTx 1.2 of Centruroides elegans (Bark scorpion).